An 83-amino-acid chain; its full sequence is Alpha-neurotoxin NTX-4 (83 aa).

Positions 1–21 (MKTLLLTLLVVTIVCLDLGYT) are cleaved as a signal peptide. Cystine bridges form between C24–C45, C38–C62, C64–C75, and C76–C81.

This sequence belongs to the three-finger toxin family. Short-chain subfamily. Type I alpha-neurotoxin sub-subfamily. In terms of tissue distribution, expressed by the venom gland.

The protein resides in the secreted. Binds to muscle nicotinic acetylcholine receptor (nAChR) and inhibit acetylcholine from binding to the receptor, thereby impairing neuromuscular transmission. The polypeptide is Alpha-neurotoxin NTX-4 (Naja sputatrix (Malayan spitting cobra)).